The chain runs to 94 residues: HssA/B-like protein 49 (94 aa).

Residues M1 to S20 form a disordered region.

This sequence belongs to the hssA/B family.

In Dictyostelium discoideum (Social amoeba), this protein is HssA/B-like protein 49 (hssl49).